The following is a 265-amino-acid chain: Undecaprenyl-diphosphatase (265 aa).

7 helical membrane-spanning segments follow: residues 38-58 (SDMFNIVIQAGAILAVTIIYW), 80-100 (LIVAFLITAILGLVVKKLGFE), 107-127 (PIAWALIIGGIWMIFAEWAAA), 135-155 (ITWLVAILVGIAQIVAGVFPG), 178-198 (TEFAFLVGIPTMYAASAYELL), 216-236 (IAFVVSTVVAFIAVKWLLAYI), and 244-264 (FAIYRIILGVLLLGMAATGLI).

Belongs to the UppP family.

It localises to the cell inner membrane. It carries out the reaction di-trans,octa-cis-undecaprenyl diphosphate + H2O = di-trans,octa-cis-undecaprenyl phosphate + phosphate + H(+). In terms of biological role, catalyzes the dephosphorylation of undecaprenyl diphosphate (UPP). Confers resistance to bacitracin. This is Undecaprenyl-diphosphatase from Rhizobium johnstonii (strain DSM 114642 / LMG 32736 / 3841) (Rhizobium leguminosarum bv. viciae).